We begin with the raw amino-acid sequence, 969 residues long: MDITVNSQSNTVAPKQAECKKMRYSIRKVATVGATSALVGTLAFLGATQVKADQVTETAPAVATATATPETSTASLTVASETATSVATSEAVESSVAHSEVATKPVTETQPSNTTPSVVEEKASSTVVTSSSDATTPSATVAAVSAPAHTSEAAVEAPTSTASSEAADTHTEVDLKVSENSAANANLSKLNGRIKSIVEENMTSDQIVALTEEEIKALNKVDFSDDAIKGTGTSLTYRNLKDIVASFLKQDSKLAVPYFKADTIINMPAFNTVDAQTMKKEEIDVWDSWPVQDAKSGVVSNWNGYQLVISMAGAPNKNSNHIYLLYRKYGDNDFTHWKNAGPIFGYNALEDDQQWSGSATVNSDGSIQLYYTKNDTSGGKLNWQQLASATLNLAVENDEVVIKSVENDHILFGGDNYHYQSYPKFMSTFDDDHNHDGNPDRTDNYCLRDPHIIEDNGSRYLIFESNTGDENYQGEKQIYKWSNYGGDDAFNLKSFLNIVNNKHLYNLASWANGSIGILKLDDNEKNPSVAELYTPLVTSHMVTDEVERPSVVKMGGKYYLFTASRINKSTDAEGTVAAREAVGDDVVMLGFVSDSLRGKYRPLNGSGVVLTASVPADWRTSTYSYYAVPVEGSSDTLLVTSYMTNRGGIAGAENKSTWAPSFLIKMNADDTTEVLPKMTNQGDWIWDKSSESLVHVGDQNSAKLPNEDFNVDYYAVSGYGLKPHTYPTVDGSTGVSEAHGVLTVTVKDGKDKKADKPETPVSPTEGNHSVDDKTNKPGTSKPADNNQPSADKEDKPTNPTNPDSPARTPFPYYGDHSNDNNSSNDHHVAVPVKPSTGDSVGDRRPVAQAAEIATPVPKTIVATGPTVPTNTVKEESVTETEAPKPVKSEEKVQSHGVDKANEVTKSDESSKGNNTKVAAKLATTPKTPSDSEGSNSNILSILATIFAAIASLALLGYGLVTGKIHLPKK.

Positions 1-52 (MDITVNSQSNTVAPKQAECKKMRYSIRKVATVGATSALVGTLAFLGATQVKA) are cleaved as a signal peptide. A compositionally biased stretch (low complexity) spans 89–103 (SEAVESSVAHSEVAT). Residues 89–169 (SEAVESSVAH…STASSEAADT (81 aa)) are disordered. Residues 106–116 (VTETQPSNTTP) show a composition bias toward polar residues. The span at 124–166 (SSTVVTSSSDATTPSATVAAVSAPAHTSEAAVEAPTSTASSEA) shows a compositional bias: low complexity. Sucrose-binding residues include Trp286, Asp287, and Ser356. Asp287 (nucleophile) is an active-site residue. Asp443 serves as a coordination point for Ca(2+). Residues Arg448 and Asp449 each contribute to the sucrose site. Residues Gln473, Asn512, and Asp544 each contribute to the Ca(2+) site. Glu545 is a sucrose binding site. The active-site Proton donor/acceptor is Glu547. Arg565 provides a ligand contact to sucrose. 2 disordered regions span residues 746-843 (VKDG…VGDR) and 860-934 (IVAT…SEGS). Positions 747 to 758 (KDGKDKKADKPE) are enriched in basic and acidic residues. Residues 776-789 (KPGTSKPADNNQPS) show a composition bias toward polar residues. A compositionally biased stretch (basic and acidic residues) spans 872-910 (VKEESVTETEAPKPVKSEEKVQSHGVDKANEVTKSDESS). Residues 924 to 934 (TPKTPSDSEGS) show a composition bias toward polar residues. Residues 938-958 (ILSILATIFAAIASLALLGYG) traverse the membrane as a helical segment.

This sequence belongs to the glycosyl hydrolase 68 family.

The protein localises to the cell membrane. Its subcellular location is the cell surface. It catalyses the reaction [6)-beta-D-fructofuranosyl-(2-&gt;](n) alpha-D-glucopyranoside + sucrose = [6)-beta-D-fructofuranosyl-(2-&gt;](n+1) alpha-D-glucopyranoside + D-glucose. Ca(2+) may play an important structural role and promote stability of levansucrase. Functionally, catalyzes the synthesis of levan, a fructose polymer, by transferring the fructosyl moiety from sucrose to a growing acceptor molecule. Also displays sucrose hydrolase activity. The chain is Levansucrase from Streptococcus salivarius.